We begin with the raw amino-acid sequence, 115 residues long: Guanylin (115 aa).

An N-terminal signal peptide occupies residues methionine 1–glycine 21. 3 disulfide bridges follow: cysteine 69-cysteine 82, cysteine 104-cysteine 112, and cysteine 107-cysteine 115.

Belongs to the guanylin family. In terms of tissue distribution, highly expressed in ileum and colon. Found in plasma.

Its subcellular location is the secreted. In terms of biological role, endogenous activator of intestinal guanylate cyclase. It stimulates this enzyme through the same receptor binding region as the heat-stable enterotoxins. This chain is Guanylin (GUCA2A), found in Homo sapiens (Human).